The sequence spans 311 residues: MKNFSIKITRIAITLILVLLGIIAIFKAWVFYTESPWTRDAKFTADVVAIAPDVTGLLTDVPLVDNQLVKKGQVLLVIDQPRYQQALAEANADVAYYQTLAAEKRREAGRRVRLGVQAMSQEEIDQANNVLQTVEHQLAKAVATRELAKLDLERTTVRAPADGWITNLNVHAGEYITRGSVAVALVKKNSFYILAYLEETKLNGLNKGDRAEITPLGSNRIMHGTVDSVAAAVNNSSSTVNSKGLASIDSNLEWVRLAQRVPVKILLDDKDQLHPYPAGTTATVVITGKNDRATDSGSPFVRLMHRLREFG.

A helical membrane pass occupies residues 11 to 31; that stretch reads IAITLILVLLGIIAIFKAWVF.

The protein belongs to the membrane fusion protein (MFP) (TC 8.A.1) family.

The protein resides in the cell inner membrane. Its function is as follows. Forms an efflux pump with AaeB. This is p-hydroxybenzoic acid efflux pump subunit AaeA from Serratia proteamaculans (strain 568).